The chain runs to 247 residues: Segregation and condensation protein A (247 aa).

It belongs to the ScpA family. In terms of assembly, component of a cohesin-like complex composed of ScpA, ScpB and the Smc homodimer, in which ScpA and ScpB bind to the head domain of Smc. The presence of the three proteins is required for the association of the complex with DNA.

It localises to the cytoplasm. Functionally, participates in chromosomal partition during cell division. May act via the formation of a condensin-like complex containing Smc and ScpB that pull DNA away from mid-cell into both cell halves. The polypeptide is Segregation and condensation protein A (Caldanaerobacter subterraneus subsp. tengcongensis (strain DSM 15242 / JCM 11007 / NBRC 100824 / MB4) (Thermoanaerobacter tengcongensis)).